The sequence spans 141 residues: MAKKIVAVIKLALQAGKANPAPPVGPALGQHGVNIMAFCKEYNARTQDKAGFVIPVEISVFEDRSFTFITKTPPASVLITKAAGIEKGAGESSKGSVGNISKSQLEEIAKTKLPDLNCTSIESAMKVIEGTARNMGVSITE.

This sequence belongs to the universal ribosomal protein uL11 family. As to quaternary structure, part of the ribosomal stalk of the 50S ribosomal subunit. Interacts with L10 and the large rRNA to form the base of the stalk. L10 forms an elongated spine to which L12 dimers bind in a sequential fashion forming a multimeric L10(L12)X complex. Post-translationally, one or more lysine residues are methylated.

Forms part of the ribosomal stalk which helps the ribosome interact with GTP-bound translation factors. This Prochlorococcus marinus subsp. pastoris (strain CCMP1986 / NIES-2087 / MED4) protein is Large ribosomal subunit protein uL11.